We begin with the raw amino-acid sequence, 406 residues long: Putative cfxQ-like protein R730 (406 aa).

The interval 1–37 is disordered; that stretch reads MKRSHDSITRSINSDNDSETNMNSDNNNNNKPNQRKK. The span at 13–32 shows a compositional bias: low complexity; the sequence is NSDNDSETNMNSDNNNNNKP. 173 to 180 contacts ATP; the sequence is GPPGVGKS.

The protein belongs to the CbxX/CfxQ family.

The sequence is that of Putative cfxQ-like protein R730 from Acanthamoeba polyphaga mimivirus (APMV).